A 364-amino-acid polypeptide reads, in one-letter code: Protein Bop (364 aa).

Positions 66 to 88 (STASGTCGGKPAERGPLAGHMPS) are disordered. The short motif at 114-128 (LDRFLAQLGDYMSFH) is the BH3 element. A disordered region spans residues 258-364 (QLTKESTPGP…PGEPPLSPGF (107 aa)). Composition is skewed to pro residues over residues 311–322 (AQRPDPAHPGGP) and 355–364 (PGEPPLSPGF).

In terms of assembly, interacts (via BH3 domain) with VDAC1. Interacts with pro-survival Bcl-2 family members, BCL2, BCL2L1 isoform Bcl-X(L), MCL1, BCL2A1 and BCL2L2. Interacts with BAX and BAK1. As to expression, ubiquitously expressed.

The protein localises to the mitochondrion. Could induce apoptosis in a BH3 domain-dependent manner. The direct interaction network of Bcl-2 family members may play a key role in modulation RTL10/BOP intrinsic apoptotic signaling activity. The polypeptide is Protein Bop (Homo sapiens (Human)).